We begin with the raw amino-acid sequence, 460 residues long: ATP synthase subunit beta (460 aa).

149–156 (GGAGVGKT) provides a ligand contact to ATP.

It belongs to the ATPase alpha/beta chains family. F-type ATPases have 2 components, CF(1) - the catalytic core - and CF(0) - the membrane proton channel. CF(1) has five subunits: alpha(3), beta(3), gamma(1), delta(1), epsilon(1). CF(0) has three main subunits: a(1), b(2) and c(9-12). The alpha and beta chains form an alternating ring which encloses part of the gamma chain. CF(1) is attached to CF(0) by a central stalk formed by the gamma and epsilon chains, while a peripheral stalk is formed by the delta and b chains.

It localises to the cell inner membrane. It catalyses the reaction ATP + H2O + 4 H(+)(in) = ADP + phosphate + 5 H(+)(out). Its function is as follows. Produces ATP from ADP in the presence of a proton gradient across the membrane. The catalytic sites are hosted primarily by the beta subunits. In Nitrosomonas europaea (strain ATCC 19718 / CIP 103999 / KCTC 2705 / NBRC 14298), this protein is ATP synthase subunit beta.